We begin with the raw amino-acid sequence, 48 residues long: Large ribosomal subunit protein bL33B (48 aa).

The protein belongs to the bacterial ribosomal protein bL33 family.

The protein is Large ribosomal subunit protein bL33B of Streptococcus thermophilus (strain CNRZ 1066).